The primary structure comprises 159 residues: Transcriptional repressor NrdR (159 aa).

A compositionally biased stretch (polar residues) spans 1–11; it reads MQCPTCQNTDS. The segment at 1–21 is disordered; it reads MQCPTCQNTDSRVLESRSADS. The segment at 3-34 is a zinc-finger region; it reads CPTCQNTDSRVLESRSADSGKSVRRRRECLNC. Positions 49 to 139 constitute an ATP-cone domain; the sequence is VSVLKKDGSR…VYRKFNGVKD (91 aa).

This sequence belongs to the NrdR family. Requires Zn(2+) as cofactor.

Its function is as follows. Negatively regulates transcription of bacterial ribonucleotide reductase nrd genes and operons by binding to NrdR-boxes. This chain is Transcriptional repressor NrdR, found in Prochlorococcus marinus (strain MIT 9301).